A 373-amino-acid chain; its full sequence is Transaldolase (373 aa).

The active-site Schiff-base intermediate with substrate is the Lys-143.

The protein belongs to the transaldolase family. Type 2 subfamily.

The protein resides in the cytoplasm. The enzyme catalyses D-sedoheptulose 7-phosphate + D-glyceraldehyde 3-phosphate = D-erythrose 4-phosphate + beta-D-fructose 6-phosphate. Its pathway is carbohydrate degradation; pentose phosphate pathway; D-glyceraldehyde 3-phosphate and beta-D-fructose 6-phosphate from D-ribose 5-phosphate and D-xylulose 5-phosphate (non-oxidative stage): step 2/3. Its function is as follows. Transaldolase is important for the balance of metabolites in the pentose-phosphate pathway. The chain is Transaldolase from Mycobacterium marinum (strain ATCC BAA-535 / M).